We begin with the raw amino-acid sequence, 538 residues long: MRNLTKTSLLLAGLCTAAQMVFVTHASAEESIEYDHTYQTPSYIIEKSPQKPVQNTTQKESLFSYLDKHQTQFKLKGNANSHFRVSKTIKDPKTKQTFFKLTEVYKGIPIYGFEQAVAMKENKQVKSFFGKVHPQIKDVSVTPSISEKKAIHTARRELEASIGKIEYLDGEPKGELYIYPHDGEYDLAYLVRLSTSEPEPGYWHYFIDAKNGKVIESFNAIHEAAGTGIGVSGDEKSFDVTEQNGRFYLADETRGKGINTFDAKNLNETLFTLLSQLIGYTGKEIVSGTSVFNEPAAVDAHANAQAVYDYYSKTFGRDSFDQNGARITSTVHVGKQWNNAAWNGVQMVYGDGDGSKFKPLSGSLDIVAHEITHAVTQYSAGLLYQGEPGALNESISDIMGAMADRDDWEIGEDVYTPGIAGDSLRSLEDPSKQGNPDHYSNRYTGTEDYGGVHINSSIHNKAAYLLAEGGVHHGVQVEGIGREASEQIYYRALTYYVTASTDFSMMKQAAIEAANDLYGEGSKQSASVEKAYEAVGIL.

The signal sequence occupies residues 1–28 (MRNLTKTSLLLAGLCTAAQMVFVTHASA). Residues 29–223 (EESIEYDHTY…VIESFNAIHE (195 aa)) constitute a propeptide, activation peptide. Residue Asp365 coordinates Ca(2+). Residue His369 coordinates Zn(2+). The active site involves Glu370. Zn(2+)-binding residues include His373 and Glu393. Ca(2+)-binding residues include Asp404, Asp406, Asp407, Glu409, Glu412, Tyr415, Thr416, Ile419, and Asp422. Positions 421–441 (GDSLRSLEDPSKQGNPDHYSN) are disordered. The active-site Proton donor is the His453.

Belongs to the peptidase M4 family. Zn(2+) is required as a cofactor.

It localises to the secreted. With respect to regulation, protease activity can be inhibited in vitro by either a zinc specific chelator, 1,10-phenanthroline, or a metal chelator, EDTA. The enzyme is resistant to phenylmethylsulfonyl fluoride and iodoacetic acid. In terms of biological role, protease able to cleave casein in vitro. This Bacillus subtilis (strain 168) protein is Neutral protease B.